A 99-amino-acid polypeptide reads, in one-letter code: uncharacterized protein (99 aa).

The signal sequence occupies residues 1 to 17; it reads MMMNAFFPAMALIVLVG. Cys-18 is lipidated: N-palmitoyl cysteine. Cys-18 is lipidated: S-diacylglycerol cysteine.

It is found in the cell membrane. This is an uncharacterized protein from Escherichia coli (strain UTI89 / UPEC).